The sequence spans 187 residues: UPF0301 protein VSAL_I0547 (187 aa).

This sequence belongs to the UPF0301 (AlgH) family.

The chain is UPF0301 protein VSAL_I0547 from Aliivibrio salmonicida (strain LFI1238) (Vibrio salmonicida (strain LFI1238)).